The chain runs to 341 residues: G2/mitotic-specific cyclin C13-1 (341 aa).

This sequence belongs to the cyclin family. Cyclin AB subfamily.

Functionally, essential for the control of the cell cycle at the G2/M (mitosis) transition. Interacts with the CDC2 and CDK2 protein kinases to form MPF. G2/M cyclins accumulate steadily during G2 and are abruptly destroyed at mitosis. This chain is G2/mitotic-specific cyclin C13-1, found in Daucus carota (Wild carrot).